The primary structure comprises 450 residues: MARRGAAVAEEPLLPSSGIVGIGPIEGINWRTWLVQVFCFALTTSVLFITLVTASLPQTGYPCFYGSLVDYTQKNHSVVDGVWMRQIAGGVAPTLFLETTSLVAFLYYTTLVLVAISFYLIISAVLVRRYARGKECTAVAGCTRPTTTLIASHVTLVLGTLATWLLQVVILLLSHKQAVLGAAVYVVHFVSLVFFCMSFSGLGTASAQYSSNLRILKTNLPALHKMAGPGRAVMTNLGMGMLGISLPILSLMLGIILANSFHITLWQTVTVAVGVFVALGLMFLIIVELIVSHYVHVLVGPALAVLVASSTLAVATHSYFVHFHAMVSVQAPNLATASKAIVGIMAVISIIMLVVRLVRAIMFHKKRNTEFYGRVKTVSSKARRYANKVRGPRRNPQPLNVAESRGMLLAEDSETDAEEPIYDVVSEEFETEYYDDPQRVPERSHRREYR.

The Intravirion portion of the chain corresponds to 1–31; that stretch reads MARRGAAVAEEPLLPSSGIVGIGPIEGINWR. A helical transmembrane segment spans residues 32-52; sequence TWLVQVFCFALTTSVLFITLV. Residues 53-101 are Virion surface-facing; sequence TASLPQTGYPCFYGSLVDYTQKNHSVVDGVWMRQIAGGVAPTLFLETTS. Residues 102-122 form a helical membrane-spanning segment; that stretch reads LVAFLYYTTLVLVAISFYLII. The Intravirion portion of the chain corresponds to 123–153; it reads SAVLVRRYARGKECTAVAGCTRPTTTLIASH. Residues 154 to 174 form a helical membrane-spanning segment; the sequence is VTLVLGTLATWLLQVVILLLS. Residues 175 to 178 lie on the Virion surface side of the membrane; it reads HKQA. Residues 179–199 form a helical membrane-spanning segment; it reads VLGAAVYVVHFVSLVFFCMSF. The Intravirion portion of the chain corresponds to 200 to 236; sequence SGLGTASAQYSSNLRILKTNLPALHKMAGPGRAVMTN. The helical transmembrane segment at 237–257 threads the bilayer; it reads LGMGMLGISLPILSLMLGIIL. Topologically, residues 258-270 are virion surface; the sequence is ANSFHITLWQTVT. The helical transmembrane segment at 271-291 threads the bilayer; that stretch reads VAVGVFVALGLMFLIIVELIV. Topologically, residues 292 to 294 are intravirion; it reads SHY. Residues 295 to 315 traverse the membrane as a helical segment; it reads VHVLVGPALAVLVASSTLAVA. Topologically, residues 316 to 334 are virion surface; that stretch reads THSYFVHFHAMVSVQAPNL. Residues 335-355 traverse the membrane as a helical segment; it reads ATASKAIVGIMAVISIIMLVV. Topologically, residues 356 to 450 are intravirion; sequence RLVRAIMFHK…PERSHRREYR (95 aa).

The protein belongs to the herpesviridae glycoprotein M family. Interacts (via N-terminus) with gN (via N-terminus). The gM-gN heterodimer forms the gCII complex.

Its subcellular location is the virion membrane. It localises to the host Golgi apparatus. The protein localises to the host trans-Golgi network. The protein resides in the host endosome membrane. It is found in the host nucleus inner membrane. In terms of biological role, envelope glycoprotein important for virion assembly and egress. Plays a role in the correct incorporation of gH-gL into virion membrane. Directs the glycoprotein N (gN) to the host trans-Golgi network. The protein is Envelope glycoprotein M of Equus caballus (Horse).